Consider the following 312-residue polypeptide: Methionyl-tRNA formyltransferase (312 aa).

Residue 117–120 coordinates (6S)-5,6,7,8-tetrahydrofolate; the sequence is SLLP.

The protein belongs to the Fmt family.

It carries out the reaction L-methionyl-tRNA(fMet) + (6R)-10-formyltetrahydrofolate = N-formyl-L-methionyl-tRNA(fMet) + (6S)-5,6,7,8-tetrahydrofolate + H(+). Attaches a formyl group to the free amino group of methionyl-tRNA(fMet). The formyl group appears to play a dual role in the initiator identity of N-formylmethionyl-tRNA by promoting its recognition by IF2 and preventing the misappropriation of this tRNA by the elongation apparatus. This chain is Methionyl-tRNA formyltransferase, found in Bordetella parapertussis (strain 12822 / ATCC BAA-587 / NCTC 13253).